Reading from the N-terminus, the 350-residue chain is 5'-tyrosyl-DNA phosphodiesterase (350 aa).

The interval 113–117 is interaction with 5' end of substrate DNA; sequence NIDGL. Residues D115 and E145 each contribute to the Mg(2+) site. The interval 219–224 is interaction with 5' end of substrate DNA; it reads HLESMR. The Proton donor/acceptor role is filled by D258. The interval 260–262 is interaction with 5' end of substrate DNA; sequence NLR.

The protein belongs to the CCR4/nocturin family. TTRAP/TDP2 subfamily. Requires Mg(2+) as cofactor. The cofactor is Mn(2+).

Its subcellular location is the nucleus. It is found in the PML body. Functionally, DNA repair enzyme that can remove a variety of covalent adducts from DNA through hydrolysis of a 5'-phosphodiester bond, giving rise to DNA with a free 5' phosphate. Catalyzes the hydrolysis of dead-end complexes between DNA and the topoisomerase 2 (top2) active site tyrosine residue. Hydrolyzes 5'-phosphoglycolates on protruding 5' ends on DNA double-strand breaks (DSBs) due to DNA damage by radiation and free radicals. The polypeptide is 5'-tyrosyl-DNA phosphodiesterase (Caenorhabditis briggsae).